Here is a 77-residue protein sequence, read N- to C-terminus: Translation initiation factor IF-1, chloroplastic (77 aa).

In terms of domain architecture, S1-like spans 1 to 71; sequence MKEQKWIHEG…TRGRIIYRLR (71 aa).

This sequence belongs to the IF-1 family. In terms of assembly, component of the 30S ribosomal translation pre-initiation complex which assembles on the 30S ribosome in the order IF-2 and IF-3, IF-1 and N-formylmethionyl-tRNA(fMet); mRNA recruitment can occur at any time during PIC assembly.

Its subcellular location is the plastid. It localises to the chloroplast. In terms of biological role, one of the essential components for the initiation of protein synthesis. Stabilizes the binding of IF-2 and IF-3 on the 30S subunit to which N-formylmethionyl-tRNA(fMet) subsequently binds. Helps modulate mRNA selection, yielding the 30S pre-initiation complex (PIC). Upon addition of the 50S ribosomal subunit IF-1, IF-2 and IF-3 are released leaving the mature 70S translation initiation complex. This is Translation initiation factor IF-1, chloroplastic from Montinia caryophyllacea (Wild clove bush).